The sequence spans 188 residues: Peptidyl-tRNA hydrolase (188 aa).

Tyr-14 serves as a coordination point for tRNA. His-19 acts as the Proton acceptor in catalysis. Positions 64, 66, and 113 each coordinate tRNA.

Belongs to the PTH family. In terms of assembly, monomer.

It localises to the cytoplasm. It carries out the reaction an N-acyl-L-alpha-aminoacyl-tRNA + H2O = an N-acyl-L-amino acid + a tRNA + H(+). Hydrolyzes ribosome-free peptidyl-tRNAs (with 1 or more amino acids incorporated), which drop off the ribosome during protein synthesis, or as a result of ribosome stalling. Functionally, catalyzes the release of premature peptidyl moieties from peptidyl-tRNA molecules trapped in stalled 50S ribosomal subunits, and thus maintains levels of free tRNAs and 50S ribosomes. This chain is Peptidyl-tRNA hydrolase, found in Chloroflexus aurantiacus (strain ATCC 29364 / DSM 637 / Y-400-fl).